Here is a 662-residue protein sequence, read N- to C-terminus: Transketolase (662 aa).

His-28 lines the substrate pocket. Residues His-68 and 115 to 117 (GPL) each bind thiamine diphosphate. Asp-156 is a Mg(2+) binding site. Gly-157 and Asn-186 together coordinate thiamine diphosphate. Mg(2+)-binding residues include Asn-186 and Ile-188. Positions 261, 356, and 383 each coordinate substrate. His-261 serves as a coordination point for thiamine diphosphate. Glu-410 serves as the catalytic Proton donor. Phe-436 serves as a coordination point for thiamine diphosphate. 3 residues coordinate substrate: His-460, Asp-468, and Arg-519.

The protein belongs to the transketolase family. Homodimer. The cofactor is Mg(2+). Ca(2+) is required as a cofactor. Requires Mn(2+) as cofactor. Co(2+) serves as cofactor. It depends on thiamine diphosphate as a cofactor.

The catalysed reaction is D-sedoheptulose 7-phosphate + D-glyceraldehyde 3-phosphate = aldehydo-D-ribose 5-phosphate + D-xylulose 5-phosphate. Its pathway is carbohydrate biosynthesis; Calvin cycle. The protein operates within carbohydrate degradation; pentose phosphate pathway. Its function is as follows. Catalyzes the transfer of a two-carbon ketol group from a ketose donor to an aldose acceptor, via a covalent intermediate with the cofactor thiamine pyrophosphate. The chain is Transketolase (tkt) from Staphylococcus aureus (strain MRSA252).